The chain runs to 142 residues: Hemoglobin subunit alpha (142 aa).

Residues 2–142 (VLSAADKNNV…VSTVLTSKYR (141 aa)) enclose the Globin domain. Serine 4 carries the phosphoserine modification. N6-succinyllysine is present on residues lysine 8 and lysine 12. At lysine 17 the chain carries N6-acetyllysine; alternate. Lysine 17 bears the N6-succinyllysine; alternate mark. Residue tyrosine 25 is modified to Phosphotyrosine. Serine 36 carries the phosphoserine modification. Lysine 41 is modified (N6-succinyllysine). A Phosphoserine modification is found at serine 50. O2 is bound at residue histidine 59. Histidine 88 is a heme b binding site. Threonine 109 is subject to Phosphothreonine. Serine 125 and serine 132 each carry phosphoserine. Residues threonine 135 and threonine 138 each carry the phosphothreonine modification. The residue at position 139 (serine 139) is a Phosphoserine.

It belongs to the globin family. As to quaternary structure, heterotetramer of two alpha chains and two beta chains. In terms of tissue distribution, red blood cells.

Functionally, involved in oxygen transport from the lung to the various peripheral tissues. Hemopressin acts as an antagonist peptide of the cannabinoid receptor CNR1. Hemopressin-binding efficiently blocks cannabinoid receptor CNR1 and subsequent signaling. In Cavia porcellus (Guinea pig), this protein is Hemoglobin subunit alpha (HBA).